A 152-amino-acid chain; its full sequence is Transcriptional regulator MraZ (152 aa).

SpoVT-AbrB domains lie at 5–52 (ASAI…PVQE) and 81–124 (AHEC…DEAA).

Belongs to the MraZ family. As to quaternary structure, forms oligomers.

The protein resides in the cytoplasm. Its subcellular location is the nucleoid. This Shewanella piezotolerans (strain WP3 / JCM 13877) protein is Transcriptional regulator MraZ.